Consider the following 117-residue polypeptide: Large ribosomal subunit protein bL19 (117 aa).

The protein belongs to the bacterial ribosomal protein bL19 family.

This protein is located at the 30S-50S ribosomal subunit interface and may play a role in the structure and function of the aminoacyl-tRNA binding site. The chain is Large ribosomal subunit protein bL19 from Vibrio vulnificus (strain CMCP6).